A 482-amino-acid polypeptide reads, in one-letter code: Glutamyl-tRNA(Gln) amidotransferase subunit A (482 aa).

Catalysis depends on charge relay system residues K74 and S149. Residue S173 is the Acyl-ester intermediate of the active site.

The protein belongs to the amidase family. GatA subfamily. As to quaternary structure, heterotrimer of A, B and C subunits.

It carries out the reaction L-glutamyl-tRNA(Gln) + L-glutamine + ATP + H2O = L-glutaminyl-tRNA(Gln) + L-glutamate + ADP + phosphate + H(+). Its function is as follows. Allows the formation of correctly charged Gln-tRNA(Gln) through the transamidation of misacylated Glu-tRNA(Gln) in organisms which lack glutaminyl-tRNA synthetase. The reaction takes place in the presence of glutamine and ATP through an activated gamma-phospho-Glu-tRNA(Gln). The protein is Glutamyl-tRNA(Gln) amidotransferase subunit A of Prochlorococcus marinus (strain MIT 9215).